The sequence spans 31 residues: Ranatuerin-2PL (31 aa).

C23 and C29 are oxidised to a cystine.

As to expression, expressed by the skin glands.

The protein resides in the secreted. In terms of biological role, antimicrobial activity against Gram-negative bacterium E.coli. The protein is Ranatuerin-2PL of Lithobates palustris (Pickerel frog).